The following is a 341-amino-acid chain: 3-dehydroquinate synthase (341 aa).

NAD(+) contacts are provided by residues 54–59, 88–92, 112–113, lysine 125, lysine 133, and 151–154; these read DGEKYK, GVVTD, TT, and TLST. Positions 166, 220, and 236 each coordinate Zn(2+).

It belongs to the sugar phosphate cyclases superfamily. Dehydroquinate synthase family. NAD(+) serves as cofactor. Requires Co(2+) as cofactor. It depends on Zn(2+) as a cofactor.

The protein localises to the cytoplasm. It catalyses the reaction 7-phospho-2-dehydro-3-deoxy-D-arabino-heptonate = 3-dehydroquinate + phosphate. Its pathway is metabolic intermediate biosynthesis; chorismate biosynthesis; chorismate from D-erythrose 4-phosphate and phosphoenolpyruvate: step 2/7. In terms of biological role, catalyzes the conversion of 3-deoxy-D-arabino-heptulosonate 7-phosphate (DAHP) to dehydroquinate (DHQ). This Thermococcus kodakarensis (strain ATCC BAA-918 / JCM 12380 / KOD1) (Pyrococcus kodakaraensis (strain KOD1)) protein is 3-dehydroquinate synthase.